The following is a 196-amino-acid chain: dTTP/UTP pyrophosphatase (196 aa).

The active-site Proton acceptor is the aspartate 77.

The protein belongs to the Maf family. YhdE subfamily. A divalent metal cation serves as cofactor.

The protein localises to the cytoplasm. The catalysed reaction is dTTP + H2O = dTMP + diphosphate + H(+). It carries out the reaction UTP + H2O = UMP + diphosphate + H(+). Nucleoside triphosphate pyrophosphatase that hydrolyzes dTTP and UTP. May have a dual role in cell division arrest and in preventing the incorporation of modified nucleotides into cellular nucleic acids. In Christiangramia forsetii (strain DSM 17595 / CGMCC 1.15422 / KT0803) (Gramella forsetii), this protein is dTTP/UTP pyrophosphatase.